Consider the following 203-residue polypeptide: Urease accessory protein UreE (203 aa).

The interval 170–203 (EHHGHSHSHSHSHSHDHDHQHGPSCSHGHHHGHR) is disordered.

Belongs to the UreE family.

It localises to the cytoplasm. Involved in urease metallocenter assembly. Binds nickel. Probably functions as a nickel donor during metallocenter assembly. The protein is Urease accessory protein UreE of Burkholderia mallei (strain SAVP1).